Reading from the N-terminus, the 200-residue chain is Holliday junction branch migration complex subunit RuvA (200 aa).

A domain I region spans residues 1 to 64 (MYAYFRGRVV…EDALQLYGFS (64 aa)). Residues 65 to 143 (SEEEKQLFRL…KLSPPGAAAT (79 aa)) form a domain II region. Residues 144–154 (PAGAVQCGIRE) form a flexible linker region. The interval 154–200 (EDATNALLTLGFSRTAAQQAVAGVLEANPGGSVEDVVKSALLAMHNR) is domain III.

This sequence belongs to the RuvA family. As to quaternary structure, homotetramer. Forms an RuvA(8)-RuvB(12)-Holliday junction (HJ) complex. HJ DNA is sandwiched between 2 RuvA tetramers; dsDNA enters through RuvA and exits via RuvB. An RuvB hexamer assembles on each DNA strand where it exits the tetramer. Each RuvB hexamer is contacted by two RuvA subunits (via domain III) on 2 adjacent RuvB subunits; this complex drives branch migration. In the full resolvosome a probable DNA-RuvA(4)-RuvB(12)-RuvC(2) complex forms which resolves the HJ.

Its subcellular location is the cytoplasm. Its function is as follows. The RuvA-RuvB-RuvC complex processes Holliday junction (HJ) DNA during genetic recombination and DNA repair, while the RuvA-RuvB complex plays an important role in the rescue of blocked DNA replication forks via replication fork reversal (RFR). RuvA specifically binds to HJ cruciform DNA, conferring on it an open structure. The RuvB hexamer acts as an ATP-dependent pump, pulling dsDNA into and through the RuvAB complex. HJ branch migration allows RuvC to scan DNA until it finds its consensus sequence, where it cleaves and resolves the cruciform DNA. This Chlorobium luteolum (strain DSM 273 / BCRC 81028 / 2530) (Pelodictyon luteolum) protein is Holliday junction branch migration complex subunit RuvA.